The primary structure comprises 470 residues: FAD-dependent monooxygenase SAT7 (470 aa).

The helical transmembrane segment at 28–48 threads the bilayer; the sequence is GLSVAIVGGGIVGIALALGLV. Positions 58, 71, and 143 each coordinate FAD. Catalysis depends on residues R227 and Y260. Positions 351 and 364 each coordinate FAD.

It belongs to the paxM FAD-dependent monooxygenase family. FAD is required as a cofactor.

It is found in the membrane. It participates in mycotoxin biosynthesis. Its function is as follows. FAD-dependent monooxygenase; part of the satratoxin SC1 cluster involved in the biosynthesis of satratoxins, trichothecene mycotoxins that are associated with human food poisonings. Satratoxins are suggested to be made by products of multiple gene clusters (SC1, SC2 and SC3) that encode 21 proteins in all, including polyketide synthases, acetyltransferases, and other enzymes expected to modify the trichothecene skeleton. SC1 encodes 10 proteins, SAT1 to SAT10. The largest are SAT8, which encodes a putative polyketide synthase (PKS) with a conventional non-reducing architecture, and SAT10, a putative protein containing four ankyrin repeats and thus may be involved in protein scaffolding. The putative short-chain reductase SAT3 may assist the PKS in some capacity. SAT6 contains a secretory lipase domain and acts probably as a trichothecene esterase. SAT5 encodes a putative acetyltransferase, and so, with SAT6, may affect endogenous protection from toxicity. The probable transcription factor SAT9 may regulate the expression of the SC1 cluster. SC2 encodes proteins SAT11 to SAT16, the largest of which encodes the putative reducing PKS SAT13. SAT11 is a cytochrome P450 monooxygenase, while SAT14 and SAT16 are probable acetyltransferases. The SC2 cluster may be regulated by the transcription factor SAT15. SC3 is a small cluster that encodes 5 proteins, SAT17 to SAT21. SAT21 is a putative MFS-type transporter which may have a role in exporting secondary metabolites. The four other proteins putatively encoded in SC3 include the taurine hydroxylase-like protein SAT17, the O-methyltransferase SAT18, the acetyltransferase SAT19, and the Cys6-type zinc finger SAT20, the latter being probably involved in regulation of SC3 expression. This chain is FAD-dependent monooxygenase SAT7, found in Stachybotrys chartarum (strain CBS 109288 / IBT 7711) (Toxic black mold).